The following is a 418-amino-acid chain: Glutamyl-tRNA reductase (418 aa).

Substrate-binding positions include 49 to 52, Ser-109, 114 to 116, and Gln-120; these read TCNR and EPQ. The active-site Nucleophile is Cys-50. 189 to 194 serves as a coordination point for NADP(+); the sequence is GAGETI.

The protein belongs to the glutamyl-tRNA reductase family. As to quaternary structure, homodimer.

It catalyses the reaction (S)-4-amino-5-oxopentanoate + tRNA(Glu) + NADP(+) = L-glutamyl-tRNA(Glu) + NADPH + H(+). The protein operates within porphyrin-containing compound metabolism; protoporphyrin-IX biosynthesis; 5-aminolevulinate from L-glutamyl-tRNA(Glu): step 1/2. Functionally, catalyzes the NADPH-dependent reduction of glutamyl-tRNA(Glu) to glutamate 1-semialdehyde (GSA). This chain is Glutamyl-tRNA reductase, found in Pectobacterium atrosepticum (strain SCRI 1043 / ATCC BAA-672) (Erwinia carotovora subsp. atroseptica).